The chain runs to 445 residues: Tubulin beta-3 chain (445 aa).

GTP-binding residues include Q11, E69, S138, G142, T143, G144, N204, and N226. A Mg(2+)-binding site is contributed by E69. Residues 425–445 (YQDATAEEYDEEEQDGEEEHD) are disordered. Positions 429–445 (TAEEYDEEEQDGEEEHD) are enriched in acidic residues.

Belongs to the tubulin family. As to quaternary structure, dimer of alpha and beta chains. A typical microtubule is a hollow water-filled tube with an outer diameter of 25 nm and an inner diameter of 15 nM. Alpha-beta heterodimers associate head-to-tail to form protofilaments running lengthwise along the microtubule wall with the beta-tubulin subunit facing the microtubule plus end conferring a structural polarity. Microtubules usually have 13 protofilaments but different protofilament numbers can be found in some organisms and specialized cells. It depends on Mg(2+) as a cofactor.

The protein resides in the cytoplasm. The protein localises to the cytoskeleton. Tubulin is the major constituent of microtubules, a cylinder consisting of laterally associated linear protofilaments composed of alpha- and beta-tubulin heterodimers. Microtubules grow by the addition of GTP-tubulin dimers to the microtubule end, where a stabilizing cap forms. Below the cap, tubulin dimers are in GDP-bound state, owing to GTPase activity of alpha-tubulin. The chain is Tubulin beta-3 chain (TUBB3) from Zea mays (Maize).